Here is a 145-residue protein sequence, read N- to C-terminus: Cuticle protein 65 (145 aa).

Tandem repeats lie at residues 27 to 30 (AAPA), 33 to 37 (AAPAV), 39 to 42 (AAPA), 86 to 89 (AAPV), 92 to 95 (AAPA), 98 to 101 (AAPA), and 123 to 126 (AAPA).

Functionally, component of the cuticle of migratory locust which contains more than 100 different structural proteins. The chain is Cuticle protein 65 from Locusta migratoria (Migratory locust).